Here is a 385-residue protein sequence, read N- to C-terminus: UPF0284 protein P9215_05181 (385 aa).

This sequence belongs to the UPF0284 family.

This chain is UPF0284 protein P9215_05181, found in Prochlorococcus marinus (strain MIT 9215).